A 214-amino-acid polypeptide reads, in one-letter code: Killer cell lectin-like receptor subfamily B member 1 (214 aa).

Residues 1–42 are Cytoplasmic-facing; the sequence is MDAPVLYAELNLAETRGLRCTSAPSLPQDACQGPGWHRVALK. A helical; Signal-anchor for type II membrane protein transmembrane segment spans residues 43 to 63; sequence LGCAGLIFLLMVLSVLVGFLV. The Extracellular portion of the chain corresponds to 64–214; that stretch reads QKPLIEKCSV…WICQKTLKHV (151 aa). The 111-residue stretch at 98–208 folds into the C-type lectin domain; that stretch reads HCDKCLFTSQ…CSSDNHWICQ (111 aa). Intrachain disulfides connect Cys-119–Cys-207 and Cys-186–Cys-199.

The protein localises to the membrane. This is Killer cell lectin-like receptor subfamily B member 1 (Klrb1) from Mus musculus (Mouse).